Consider the following 860-residue polypeptide: Beta-glucosidase A (860 aa).

Residues 1–19 form the signal peptide; the sequence is MRFTLIEAVALTAVSLASA. N-linked (GlcNAc...) asparagine glycans are attached at residues Asn61, Asn211, and Asn252. Asp280 is a catalytic residue. Asn315, Asn322, Asn354, Asn387, Asn442, Asn523, Asn542, Asn564, Asn658, Asn690, and Asn712 each carry an N-linked (GlcNAc...) asparagine glycan. The segment at 719–753 is disordered; the sequence is SSGDASYGQDSSDYLPEGATDGSAQPILPAGGGPG.

The protein belongs to the glycosyl hydrolase 3 family.

Its subcellular location is the secreted. The catalysed reaction is Hydrolysis of terminal, non-reducing beta-D-glucosyl residues with release of beta-D-glucose.. Its pathway is glycan metabolism; cellulose degradation. Its function is as follows. Beta-glucosidases are one of a number of cellulolytic enzymes involved in the degradation of cellulosic biomass. Catalyzes the last step releasing glucose from the inhibitory cellobiose. This chain is Beta-glucosidase A (bglA), found in Aspergillus kawachii (strain NBRC 4308) (White koji mold).